The sequence spans 510 residues: GTPase Der (510 aa).

EngA-type G domains are found at residues leucine 3–alanine 167 and isoleucine 230–threonine 405. GTP contacts are provided by residues glycine 9–serine 16, aspartate 56–phenylalanine 60, asparagine 119–glutamate 122, glycine 236–serine 243, aspartate 283–leucine 287, and serine 348–aspartate 351. One can recognise a KH-like domain in the interval alanine 406–lysine 490.

Belongs to the TRAFAC class TrmE-Era-EngA-EngB-Septin-like GTPase superfamily. EngA (Der) GTPase family. As to quaternary structure, associates with the 50S ribosomal subunit.

GTPase that plays an essential role in the late steps of ribosome biogenesis. The sequence is that of GTPase Der from Hyphomonas neptunium (strain ATCC 15444).